Reading from the N-terminus, the 122-residue chain is Large ribosomal subunit protein uL14 (122 aa).

The protein belongs to the universal ribosomal protein uL14 family. As to quaternary structure, part of the 50S ribosomal subunit. Forms a cluster with proteins L3 and L19. In the 70S ribosome, L14 and L19 interact and together make contacts with the 16S rRNA in bridges B5 and B8.

In terms of biological role, binds to 23S rRNA. Forms part of two intersubunit bridges in the 70S ribosome. This is Large ribosomal subunit protein uL14 from Acidiphilium cryptum (strain JF-5).